The following is a 1251-amino-acid chain: Probable transcription factor TDA9 (1251 aa).

2 C2H2-type zinc fingers span residues 61–83 (FLCHICTRGFVRQEHLKRHQRAH) and 89–112 (FLCVFCGRCFARRDLVLRHQHKLH). Disordered regions lie at residues 160-227 (VQLK…KSKR) and 398-428 (NHSHPDSRHNNSSSGINYSNNKNNNESIEKS). Over residues 164-173 (KAAKEKKNGK) the composition is skewed to basic residues. Polar residues predominate over residues 183-202 (YGANNHSTDVSPSVGNSSTP). Positions 407–428 (NNSSSGINYSNNKNNNESIEKS) are enriched in low complexity. Phosphoserine is present on residues S527 and S603. Over residues 617–634 (SLTPSLTTQTATTQSGPG) the composition is skewed to low complexity. Residues 617-636 (SLTPSLTTQTATTQSGPGWT) are disordered.

The protein belongs to the RSF2/TDA9 family.

Its subcellular location is the nucleus. Its function is as follows. DNA-binding protein that acts probably as a transcription factor. The chain is Probable transcription factor TDA9 (TDA9) from Saccharomyces cerevisiae (strain ATCC 204508 / S288c) (Baker's yeast).